Consider the following 235-residue polypeptide: Adenosine 5'-phosphosulfate reductase (235 aa).

[4Fe-4S] cluster contacts are provided by Cys121, Cys122, Cys204, and Cys207. Cys230 functions as the Nucleophile; cysteine thiosulfonate intermediate in the catalytic mechanism.

This sequence belongs to the PAPS reductase family. CysH subfamily. It depends on [4Fe-4S] cluster as a cofactor.

It is found in the cytoplasm. It catalyses the reaction [thioredoxin]-disulfide + sulfite + AMP + 2 H(+) = adenosine 5'-phosphosulfate + [thioredoxin]-dithiol. It participates in sulfur metabolism; hydrogen sulfide biosynthesis; sulfite from sulfate. Its function is as follows. Catalyzes the formation of sulfite from adenosine 5'-phosphosulfate (APS) using thioredoxin as an electron donor. The chain is Adenosine 5'-phosphosulfate reductase from Geobacillus kaustophilus (strain HTA426).